The following is a 276-amino-acid chain: Undecaprenyl-diphosphatase 2 (276 aa).

The next 8 helical transmembrane spans lie at 1-21 (MSLWFLVFLSVLQGVTELFPV), 44-64 (QLLPFLVALHLGTALALLWYF), 87-107 (GHLMWALIIGTIPTGIVGLLL), 114-134 (VFHDLRIVAVALIINGVLLWV), 150-170 (MTFKQAFFVGLAQIGALIPGF), 190-210 (AAEFSFLLGTPIIFAAGVLEL), 220-240 (LMDALLGGVLTAIAAYLSVRF), and 251-271 (LASFGVYCVIAGVFFLGWFML).

This sequence belongs to the UppP family.

The protein resides in the cell inner membrane. The enzyme catalyses di-trans,octa-cis-undecaprenyl diphosphate + H2O = di-trans,octa-cis-undecaprenyl phosphate + phosphate + H(+). Its function is as follows. Catalyzes the dephosphorylation of undecaprenyl diphosphate (UPP). Confers resistance to bacitracin. This Burkholderia ambifaria (strain ATCC BAA-244 / DSM 16087 / CCUG 44356 / LMG 19182 / AMMD) (Burkholderia cepacia (strain AMMD)) protein is Undecaprenyl-diphosphatase 2.